Consider the following 328-residue polypeptide: Methionine import ATP-binding protein MetN 1 (328 aa).

One can recognise an ABC transporter domain in the interval 2 to 241 (ISIERLSKTY…PLSRLGRSLL (240 aa)). Position 38-45 (38-45 (GRSGAGKS)) interacts with ATP.

Belongs to the ABC transporter superfamily. Methionine importer (TC 3.A.1.24) family. As to quaternary structure, the complex is composed of two ATP-binding proteins (MetN), two transmembrane proteins (MetI) and a solute-binding protein (MetQ).

Its subcellular location is the cell inner membrane. The catalysed reaction is L-methionine(out) + ATP + H2O = L-methionine(in) + ADP + phosphate + H(+). It carries out the reaction D-methionine(out) + ATP + H2O = D-methionine(in) + ADP + phosphate + H(+). In terms of biological role, part of the ABC transporter complex MetNIQ involved in methionine import. Responsible for energy coupling to the transport system. This Yersinia pestis bv. Antiqua (strain Nepal516) protein is Methionine import ATP-binding protein MetN 1.